Reading from the N-terminus, the 570-residue chain is La-related protein 7 (570 aa).

Met-1 is modified (N-acetylmethionine). Residues 1 to 16 (METENQKTMEESTKRK) show a composition bias toward basic and acidic residues. 2 disordered regions span residues 1-24 (METE…KRSR) and 180-364 (LNNP…ERHK). One can recognise an HTH La-type RNA-binding domain in the interval 22 to 116 (RSRVKQVLAD…KPLGERPKDE (95 aa)). One can recognise an RRM domain in the interval 119 to 197 (RTVYVELLPK…PRKPGIFPKT (79 aa)). A compositionally biased stretch (basic residues) spans 213-222 (KKKKKKKGRI). Lys-231 is covalently cross-linked (Glycyl lysine isopeptide (Lys-Gly) (interchain with G-Cter in SUMO2)). Thr-251 bears the Phosphothreonine mark. Ser-253 and Ser-256 each carry phosphoserine. Thr-260 bears the Phosphothreonine mark. A compositionally biased stretch (basic and acidic residues) spans 286 to 295 (RAGKRERCSA). 2 positions are modified to phosphoserine: Ser-294 and Ser-334. Thr-335 bears the Phosphothreonine mark. Residues 340–349 (ETDRKGDSLS) are compositionally biased toward basic and acidic residues. Phosphoserine is present on Ser-347. Basic residues predominate over residues 350–363 (KVKRKHKKKHKERH). Lys-406 participates in a covalent cross-link: Glycyl lysine isopeptide (Lys-Gly) (interchain with G-Cter in SUMO2). The xRRM domain maps to 438–551 (QFVTGVIVKI…TEKLITKAEK (114 aa)).

This sequence belongs to the LARP7 family. Core component of the 7SK RNP complex, at least composed of 7SK RNA, LARP7, MEPCE, HEXIM1 (or HEXIM2) and P-TEFb (composed of CDK9 and CCNT1/cyclin-T1). Interacts with METTL16. Interacts with RBM7; upon genotoxic stress this interaction is enhanced, triggering the release of inactive P-TEFb complex from the core, yielding to P-TEFb complex activation. Associates with box C/D small nucleolar ribonucleoprotein (snoRNP) complexes.

It localises to the nucleus. Its subcellular location is the nucleoplasm. Its function is as follows. RNA-binding protein that specifically binds distinct small nuclear RNA (snRNAs) and regulates their processing and function. Specifically binds the 7SK snRNA (7SK RNA) and acts as a core component of the 7SK ribonucleoprotein (RNP) complex, thereby acting as a negative regulator of transcription elongation by RNA polymerase II. The 7SK RNP complex sequesters the positive transcription elongation factor b (P-TEFb) in a large inactive 7SK RNP complex preventing RNA polymerase II phosphorylation and subsequent transcriptional elongation. The 7SK RNP complex also promotes snRNA gene transcription by RNA polymerase II via interaction with the little elongation complex (LEC). LARP7 specifically binds to the highly conserved 3'-terminal U-rich stretch of 7SK RNA; on stimulation, remains associated with 7SK RNA, whereas P-TEFb is released from the complex. LARP7 also acts as a regulator of mRNA splicing fidelity by promoting U6 snRNA processing. Specifically binds U6 snRNAs and associates with a subset of box C/D RNP complexes: promotes U6 snRNA 2'-O-methylation by facilitating U6 snRNA loading into box C/D RNP complexes. U6 snRNA 2'-O-methylation is required for mRNA splicing fidelity. Binds U6 snRNAs with a 5'-CAGGG-3' sequence motif. U6 snRNA processing is required for spermatogenesis. In Mus musculus (Mouse), this protein is La-related protein 7.